The primary structure comprises 569 residues: Sulfite reductase [NADPH] hemoprotein beta-component (569 aa).

[4Fe-4S] cluster contacts are provided by Cys-433, Cys-439, Cys-478, and Cys-482. Cys-482 is a binding site for siroheme.

This sequence belongs to the nitrite and sulfite reductase 4Fe-4S domain family. Alpha(8)-beta(8). The alpha component is a flavoprotein, the beta component is a hemoprotein. Siroheme is required as a cofactor. Requires [4Fe-4S] cluster as cofactor.

It carries out the reaction hydrogen sulfide + 3 NADP(+) + 3 H2O = sulfite + 3 NADPH + 4 H(+). It functions in the pathway sulfur metabolism; hydrogen sulfide biosynthesis; hydrogen sulfide from sulfite (NADPH route): step 1/1. In terms of biological role, component of the sulfite reductase complex that catalyzes the 6-electron reduction of sulfite to sulfide. This is one of several activities required for the biosynthesis of L-cysteine from sulfate. The chain is Sulfite reductase [NADPH] hemoprotein beta-component from Shewanella sediminis (strain HAW-EB3).